Here is a 78-residue protein sequence, read N- to C-terminus: uncharacterized protein (78 aa).

Basic and acidic residues predominate over residues 56-66 (ERANAGKRVSE). Residues 56–78 (ERANAGKRVSEEEQINGKRKRKD) form a disordered region.

This is an uncharacterized protein from Saccharomyces cerevisiae (strain ATCC 204508 / S288c) (Baker's yeast).